A 163-amino-acid polypeptide reads, in one-letter code: NADH-quinone oxidoreductase subunit I (163 aa).

4Fe-4S ferredoxin-type domains lie at 55–84 (RRYPSGEERCIACKLCEAICPAQAITIDAE) and 94–123 (TRYDIDMTKCIYCGYCQEACPVDAIVEGPN). Positions 64, 67, 70, 74, 103, 106, 109, and 113 each coordinate [4Fe-4S] cluster.

It belongs to the complex I 23 kDa subunit family. In terms of assembly, NDH-1 is composed of 14 different subunits. Subunits NuoA, H, J, K, L, M, N constitute the membrane sector of the complex. It depends on [4Fe-4S] cluster as a cofactor.

It is found in the cell inner membrane. The enzyme catalyses a quinone + NADH + 5 H(+)(in) = a quinol + NAD(+) + 4 H(+)(out). Functionally, NDH-1 shuttles electrons from NADH, via FMN and iron-sulfur (Fe-S) centers, to quinones in the respiratory chain. The immediate electron acceptor for the enzyme in this species is believed to be ubiquinone. Couples the redox reaction to proton translocation (for every two electrons transferred, four hydrogen ions are translocated across the cytoplasmic membrane), and thus conserves the redox energy in a proton gradient. This Rhodobacter capsulatus (Rhodopseudomonas capsulata) protein is NADH-quinone oxidoreductase subunit I (nuoI).